Reading from the N-terminus, the 349-residue chain is uncharacterized protein (349 aa).

The signal sequence occupies residues methionine 1–glycine 25.

This sequence belongs to the bacterial solute-binding protein 1 family. WtpA subfamily.

This is an uncharacterized protein from Methanococcus aeolicus (strain ATCC BAA-1280 / DSM 17508 / OCM 812 / Nankai-3).